The sequence spans 228 residues: MAIPANEIDLARYLEHSLLHPAATEAQVKECCEAAVQFDFPAVCLYPTAIKTARDFLHQRPIQICSVVGFPAGAHTTATKLYEAQEAVENGATELDVMLNLAFVKMGESEKLYQEVAQIVELTKVPIKGILETALLTDTEKRLAAEICLDAGVSYLKTSTGWFGGTTVADVKLLYGITKGRIGIKAAGGIKTVDQAIALIQAGATRLGTSRSIKIMQEREQVSDNPTW.

The active-site Proton donor/acceptor is aspartate 96. The Schiff-base intermediate with acetaldehyde role is filled by lysine 157. Lysine 185 serves as the catalytic Proton donor/acceptor.

This sequence belongs to the DeoC/FbaB aldolase family. DeoC type 1 subfamily.

It is found in the cytoplasm. It carries out the reaction 2-deoxy-D-ribose 5-phosphate = D-glyceraldehyde 3-phosphate + acetaldehyde. Its pathway is carbohydrate degradation; 2-deoxy-D-ribose 1-phosphate degradation; D-glyceraldehyde 3-phosphate and acetaldehyde from 2-deoxy-alpha-D-ribose 1-phosphate: step 2/2. In terms of biological role, catalyzes a reversible aldol reaction between acetaldehyde and D-glyceraldehyde 3-phosphate to generate 2-deoxy-D-ribose 5-phosphate. This chain is Deoxyribose-phosphate aldolase, found in Picosynechococcus sp. (strain ATCC 27264 / PCC 7002 / PR-6) (Agmenellum quadruplicatum).